The following is a 219-amino-acid chain: GPI ethanolamine phosphate transferase, stabilizing subunit (219 aa).

6 consecutive transmembrane segments (helical) span residues 11 to 31 (YTHL…SLFL), 42 to 62 (TWLC…YLVV), 86 to 106 (YFLM…APLI), 113 to 133 (FLFA…LLGP), 155 to 175 (LQIT…PIPL), and 189 to 209 (TLGA…WIYW).

This sequence belongs to the PIGF family. In terms of assembly, part of the ethanolamine phosphate transferase 3 complex composed by PIGO and PIGF. Part of the ethanolamine phosphate transferase 2 complex with PIGG. PIGF is required to stabilize PIGG and PIGO.

Its subcellular location is the endoplasmic reticulum membrane. It participates in glycolipid biosynthesis; glycosylphosphatidylinositol-anchor biosynthesis. Stabilizing subunit of the ethanolamine phosphate transferase 3 and ethanolamine phosphate transferase 2 complexes that sequentially transfer an ethanolamine phosphate (EtNP) from a phosphatidylethanolamine (PE) to the 6-OH position of the third alpha-1,2-linked mannose and the second alpha-1,6-linked mannose of the alpha-D-Man-(1-&gt;2)-alpha-D-Man-(1-&gt;6)-2-PEtn-alpha-D-Man-(1-&gt;4)-alpha-D-GlcN-(1-&gt;6)-(1-radyl,2-acyl-sn-glycero-3-phospho)-2-acyl-inositol (also termed H6) intermediate to generate a 6-PEtn-alpha-D-Man-(1-&gt;2)-6-PEtn-alpha-D-Man-(1-&gt;6)-2-PEtn-alpha-D-Man-(1-&gt;4)-alpha-D-GlcN-(1-&gt;6)-(1-radyl,2-acyl-sn-glycero-3-phospho)-2-acyl-inositol (also termed H8). Participates in the tenth and eleventh steps of the glycosylphosphatidylinositol-anchor biosynthesis, in association with PIGO and PIGG, respectively. The sequence is that of GPI ethanolamine phosphate transferase, stabilizing subunit from Homo sapiens (Human).